The following is a 632-amino-acid chain: Pentatricopeptide repeat-containing protein ELI1, chloroplastic (632 aa).

The transit peptide at 1–19 directs the protein to the chloroplast; sequence MASSPLLATSLPQNQLSTT. 10 PPR repeats span residues 94 to 128, 129 to 159, 160 to 194, 196 to 221, 222 to 256, 258 to 292, 293 to 323, 324 to 354, 360 to 395, and 396 to 426; these read DLFLFTAAINTASINGLKDQAFLLYVQLLSSEINP, NEFTFSSLLKSCSTKSGKLIHTHVLKFGLGI, DPYVATGLVDVYAKGGDVVSAQKVFDRMPERSLVS, TAMITCYAKQGNVEAARALFDSMCER, DIVSWNVMIDGYAQHGFPNDALMLFQKLLAEGKPK, DEITVVAALSACSQIGALETGRWIHVFVKSSRIRL, NVKVCTGLIDMYSKCGSLEEAVLVFNDTPRK, DIVAWNAMIAGYAMHGYSQDALRLFNEMQGI, TDITFIGTLQACAHAGLVNEGIRIFESMGQEYGIKP, and KIEHYGCLVSLLGRAGQLKRAYETIKNMNMD. A type E motif region spans residues 431 to 506; sequence LWSSVLGSCK…EPGISTIEIE (76 aa). The interval 497–512 is required for function in RNA editing; that stretch reads EPGISTIEIENKVHEF. The type E(+) motif stretch occupies residues 507–537; that stretch reads NKVHEFRAGDREHSKSKEIYTMLRKISERIK. Residues 538–632 form a type DYW motif region; sequence SHGYVPNTNT…DGSCSCGDFW (95 aa).

The protein belongs to the PPR family. PCMP-H subfamily. Zn(2+) is required as a cofactor.

The protein resides in the plastid. It localises to the chloroplast. Its function is as follows. Plays a major role in single RNA editing events in chloroplasts. Acts as a site-recognition transacting factor involved in the edition of the site 5 of ndhB1 and ndhB2 (ndhB1-5 and ndhB2-5 sites corresponding to cytidine-830), which are plastid-encoded subunits of the NADH-plastoquinone oxidoreductase. May provide the catalytic activity for editing site conversion. In Arabidopsis thaliana (Mouse-ear cress), this protein is Pentatricopeptide repeat-containing protein ELI1, chloroplastic.